Reading from the N-terminus, the 376-residue chain is MSCSNVTMLVSSKPSLPDASNLSFRSAFNPFQLPSQNSSSSCTPSRPTSIQCGLKDLKNRIDSVKNTQKITEAMKLVAAAKVRRAQEAVVNGRPFSETLVEVLYSINEQLQTDDIESPLTKLRPVKKVALVVCTGDRGLCGGFNNAILKKAEARIAELKELGLEYTVVSVGRKGNSYFNRRPYIPVDRFLEGGSLPTAKEAQTIADDVFSLFVSEEVDKVELLYTKFVSLVKSNPIIHTLLPLSPKGEICDINGNCVDAAEDELFRLTTKEGKLTVERDVIRSKTVDFSPILQFEQDPVQILDALLPLYLNSQILRPLQESLASELAARMSAMSSAFDNASELKTDLTRVYNRATQAKITGEILEIVAGDIECIIW.

The N-terminal 52 residues, 1–52, are a transit peptide targeting the chloroplast; that stretch reads MSCSNVTMLVSSKPSLPDASNLSFRSAFNPFQLPSQNSSSSCTPSRPTSIQC. Residue Cys133 is part of the active site. A disulfide bridge connects residues Cys250 and Cys256.

This sequence belongs to the ATPase gamma chain family. As to quaternary structure, F-type ATPases have 2 components, CF(1) - the catalytic core - and CF(0) - the membrane proton channel. CF(1) has five subunits: alpha(3), beta(3), gamma(1), delta(1), epsilon(1). CF(0) has four main subunits: a, b, b' and c.

It is found in the plastid. The protein resides in the chloroplast thylakoid membrane. Functionally, produces ATP from ADP in the presence of a proton gradient across the membrane. The gamma chain is believed to be important in regulating ATPase activity and the flow of protons through the CF(0) complex. In Pisum sativum (Garden pea), this protein is ATP synthase gamma chain, chloroplastic (ATPC).